Consider the following 489-residue polypeptide: Anthranilate synthase component 1 1 (489 aa).

262–264 (PYS) lines the L-tryptophan pocket. Residues 288–309 (DRIETEPIAGTRPRGETPDADD) are disordered. 297–298 (GT) provides a ligand contact to chorismate. Residues 300–309 (PRGETPDADD) show a composition bias toward basic and acidic residues. Glutamate 324 lines the Mg(2+) pocket. Residues tyrosine 412, arginine 432, 446–448 (GAG), and glycine 448 each bind chorismate. Glutamate 461 contributes to the Mg(2+) binding site.

It belongs to the anthranilate synthase component I family. As to quaternary structure, tetramer of two components I and two components II. Requires Mg(2+) as cofactor.

It carries out the reaction chorismate + L-glutamine = anthranilate + pyruvate + L-glutamate + H(+). The protein operates within amino-acid biosynthesis; L-tryptophan biosynthesis; L-tryptophan from chorismate: step 1/5. The sequence is that of Anthranilate synthase component 1 1 (trpE1) from Haloarcula marismortui (strain ATCC 43049 / DSM 3752 / JCM 8966 / VKM B-1809) (Halobacterium marismortui).